Consider the following 278-residue polypeptide: 4-deoxy-L-threo-5-hexosulose-uronate ketol-isomerase (278 aa).

The Zn(2+) site is built by H196, H198, E203, and H245.

Belongs to the KduI family. As to quaternary structure, homohexamer. It depends on Zn(2+) as a cofactor.

The catalysed reaction is 5-dehydro-4-deoxy-D-glucuronate = 3-deoxy-D-glycero-2,5-hexodiulosonate. The protein operates within glycan metabolism; pectin degradation; 2-dehydro-3-deoxy-D-gluconate from pectin: step 4/5. In terms of biological role, catalyzes the isomerization of 5-dehydro-4-deoxy-D-glucuronate to 3-deoxy-D-glycero-2,5-hexodiulosonate. The protein is 4-deoxy-L-threo-5-hexosulose-uronate ketol-isomerase of Escherichia coli O127:H6 (strain E2348/69 / EPEC).